We begin with the raw amino-acid sequence, 277 residues long: 2,5-diketo-D-gluconic acid reductase B (277 aa).

The Proton donor role is filled by Tyr51. Position 109 (His109) interacts with substrate. Residue 189–242 (SPLARRSELLTEQLLQELAVVYGVTPTQVVLRWHVQLGSTPIPKSADPDRQREN) participates in NADP(+) binding.

The protein belongs to the aldo/keto reductase family.

Its subcellular location is the cytoplasm. It catalyses the reaction 2-dehydro-D-gluconate + NADP(+) = 2,5-didehydro-D-gluconate + NADPH + H(+). In terms of biological role, catalyzes the reduction of 2,5-diketo-D-gluconic acid (25DKG) to 2-keto-L-gulonic acid (2KLG). 25DKGR-B has higher catalytic efficiency than 25DKGR-A. In Corynebacterium sp. (strain SHS752001), this protein is 2,5-diketo-D-gluconic acid reductase B (dkgB).